The following is a 241-amino-acid chain: Uridylate kinase (241 aa).

Position 12–15 (12–15 (KLSG)) interacts with ATP. Glycine 54 contacts UMP. Residues glycine 55 and arginine 59 each coordinate ATP. UMP is bound by residues aspartate 74 and 135–142 (TGNPFFTT). Residues threonine 162, tyrosine 168, and aspartate 171 each contribute to the ATP site.

The protein belongs to the UMP kinase family. In terms of assembly, homohexamer.

Its subcellular location is the cytoplasm. The enzyme catalyses UMP + ATP = UDP + ADP. It participates in pyrimidine metabolism; CTP biosynthesis via de novo pathway; UDP from UMP (UMPK route): step 1/1. Inhibited by UTP. In terms of biological role, catalyzes the reversible phosphorylation of UMP to UDP. In Magnetococcus marinus (strain ATCC BAA-1437 / JCM 17883 / MC-1), this protein is Uridylate kinase.